We begin with the raw amino-acid sequence, 153 residues long: Cytochrome c-type biogenesis protein CcmE (153 aa).

Residues 1 to 7 (MKPRHKR) lie on the Cytoplasmic side of the membrane. Residues 8 to 28 (LAIAGGVLVAVGAIATLVLNA) form a helical; Signal-anchor for type II membrane protein membrane-spanning segment. Over 29–153 (FQSNLVFFYS…SSQAATGDPR (125 aa)) the chain is Periplasmic. Positions 120 and 124 each coordinate heme. The disordered stretch occupies residues 130 to 153 (AEALKRAKEGGQMQSSQAATGDPR). Residues 141–153 (QMQSSQAATGDPR) show a composition bias toward polar residues.

It belongs to the CcmE/CycJ family.

The protein localises to the cell inner membrane. Its function is as follows. Heme chaperone required for the biogenesis of c-type cytochromes. Transiently binds heme delivered by CcmC and transfers the heme to apo-cytochromes in a process facilitated by CcmF and CcmH. The sequence is that of Cytochrome c-type biogenesis protein CcmE from Leptothrix cholodnii (strain ATCC 51168 / LMG 8142 / SP-6) (Leptothrix discophora (strain SP-6)).